The sequence spans 1723 residues: Lys-gingipain HG66 (1723 aa).

The first 24 residues, 1-24 (MRKLLLLIAASLLGVGLYAQNAKI), serve as a signal peptide directing secretion. A propeptide spanning residues 25–228 (KLDAPTTRTT…ETAYKQLFNR (204 aa)) is cleaved from the precursor. Residues aspartate 313, aspartate 337, aspartate 339, phenylalanine 341, and glutamate 343 each coordinate Ca(2+). The Proton donor role is filled by histidine 444. Cysteine 477 functions as the Nucleophile in the catalytic mechanism. Residues phenylalanine 482 and glutamate 491 each coordinate Ca(2+). The interval 965-985 (DAPNGTPNPNPNPNPGTTTLS) is disordered. Residues serine 987, glutamate 989, aspartate 1000, aspartate 1002, aspartate 1004, histidine 1006, serine 1021, glycine 1023, asparagine 1042, aspartate 1145, and glutamate 1146 each coordinate Ca(2+).

The protein belongs to the peptidase C25 family. Post-translationally, proteolytically cleaved into a catalytic subunit and three adhesins. Arg-gingipain is involved in this post-translational processing.

Its subcellular location is the secreted. It catalyses the reaction Endopeptidase with strict specificity for lysyl bonds.. Cysteine proteinase with a strong preference for substrates with Lys in the P1 position. Hydrolyzes bovine hemoglobin, bovine serum albumin, casein, human placental type I collagen and human IgA and IgG. Disrupts the functions of polymorphonuclear leukocytes. May act as a virulence factor in the development of peridontal disease. Involved in the coaggregation of P.gingivalis with other oral bacteria. This Porphyromonas gingivalis (Bacteroides gingivalis) protein is Lys-gingipain HG66.